The sequence spans 354 residues: Ferrochelatase (354 aa).

Residues histidine 214 and glutamate 295 each contribute to the Fe cation site.

This sequence belongs to the ferrochelatase family.

It is found in the cytoplasm. The catalysed reaction is heme b + 2 H(+) = protoporphyrin IX + Fe(2+). The protein operates within porphyrin-containing compound metabolism; protoheme biosynthesis; protoheme from protoporphyrin-IX: step 1/1. Its function is as follows. Catalyzes the ferrous insertion into protoporphyrin IX. The protein is Ferrochelatase of Burkholderia orbicola (strain AU 1054).